The sequence spans 337 residues: Methylthioribose-1-phosphate isomerase (337 aa).

Substrate contacts are provided by residues 51–53 (RGA), Arg88, and Gln187. Asp228 (proton donor) is an active-site residue. 238–239 (NK) contacts substrate.

Belongs to the eIF-2B alpha/beta/delta subunits family. MtnA subfamily.

It catalyses the reaction 5-(methylsulfanyl)-alpha-D-ribose 1-phosphate = 5-(methylsulfanyl)-D-ribulose 1-phosphate. It functions in the pathway amino-acid biosynthesis; L-methionine biosynthesis via salvage pathway; L-methionine from S-methyl-5-thio-alpha-D-ribose 1-phosphate: step 1/6. Functionally, catalyzes the interconversion of methylthioribose-1-phosphate (MTR-1-P) into methylthioribulose-1-phosphate (MTRu-1-P). This Anaeromyxobacter sp. (strain Fw109-5) protein is Methylthioribose-1-phosphate isomerase.